Consider the following 205-residue polypeptide: Small ribosomal subunit protein uS4 (205 aa).

The disordered stretch occupies residues 27–46; it reads LNKRDYAPGQHGQRRKGKPS. Positions 118–178 constitute an S4 RNA-binding domain; the sequence is HGHVLVNGKR…HVDHRLMKGT (61 aa).

Belongs to the universal ribosomal protein uS4 family. As to quaternary structure, part of the 30S ribosomal subunit. Contacts protein S5. The interaction surface between S4 and S5 is involved in control of translational fidelity.

In terms of biological role, one of the primary rRNA binding proteins, it binds directly to 16S rRNA where it nucleates assembly of the body of the 30S subunit. Its function is as follows. With S5 and S12 plays an important role in translational accuracy. This Granulibacter bethesdensis (strain ATCC BAA-1260 / CGDNIH1) protein is Small ribosomal subunit protein uS4.